A 325-amino-acid chain; its full sequence is Beta-ketoacyl-[acyl-carrier-protein] synthase III (325 aa).

Catalysis depends on residues Cys-116 and His-252. The segment at 253 to 257 (QANLR) is ACP-binding. The active site involves Asn-282.

It belongs to the thiolase-like superfamily. FabH family. As to quaternary structure, homodimer.

It localises to the cytoplasm. The enzyme catalyses malonyl-[ACP] + acetyl-CoA + H(+) = 3-oxobutanoyl-[ACP] + CO2 + CoA. The protein operates within lipid metabolism; fatty acid biosynthesis. Its function is as follows. Catalyzes the condensation reaction of fatty acid synthesis by the addition to an acyl acceptor of two carbons from malonyl-ACP. Catalyzes the first condensation reaction which initiates fatty acid synthesis and may therefore play a role in governing the total rate of fatty acid production. Possesses both acetoacetyl-ACP synthase and acetyl transacylase activities. Its substrate specificity determines the biosynthesis of branched-chain and/or straight-chain of fatty acids. This Xanthomonas axonopodis pv. citri (strain 306) protein is Beta-ketoacyl-[acyl-carrier-protein] synthase III.